Reading from the N-terminus, the 1222-residue chain is ATP-dependent helicase/nuclease subunit A (1222 aa).

The UvrD-like helicase ATP-binding domain maps to 39 to 495; it reads QKRTAQQIEA…ILLKENFRSQ (457 aa). 60-67 is an ATP binding site; the sequence is ASAGSGKT. The UvrD-like helicase C-terminal domain occupies 524 to 810; sequence QLIAGSHAQT…NLMTIHKSKG (287 aa).

Belongs to the helicase family. AddA subfamily. In terms of assembly, heterodimer of AddA and AddB/RexB. Mg(2+) is required as a cofactor.

The catalysed reaction is Couples ATP hydrolysis with the unwinding of duplex DNA by translocating in the 3'-5' direction.. It catalyses the reaction ATP + H2O = ADP + phosphate + H(+). Functionally, the heterodimer acts as both an ATP-dependent DNA helicase and an ATP-dependent, dual-direction single-stranded exonuclease. Recognizes the chi site generating a DNA molecule suitable for the initiation of homologous recombination. The AddA nuclease domain is required for chi fragment generation; this subunit has the helicase and 3' -&gt; 5' nuclease activities. This is ATP-dependent helicase/nuclease subunit A from Streptococcus pyogenes serotype M2 (strain MGAS10270).